The sequence spans 360 residues: Phospho-N-acetylmuramoyl-pentapeptide-transferase (360 aa).

10 helical membrane-spanning segments follow: residues 18 to 38 (VFSY…FISL), 73 to 93 (TMGG…WADL), 94 to 114 (SNIY…VGFV), 134 to 154 (YFWQ…IAQG), 168 to 188 (LLPQ…VGTS), 199 to 219 (GLAI…AYVT), 239 to 259 (LVIV…FNTY), 263 to 283 (VFMG…IAIL), 288 to 308 (LVLF…ILQV), and 338 to 358 (VIVR…ATLK).

It belongs to the glycosyltransferase 4 family. MraY subfamily. Mg(2+) is required as a cofactor.

The protein localises to the cell inner membrane. The enzyme catalyses UDP-N-acetyl-alpha-D-muramoyl-L-alanyl-gamma-D-glutamyl-meso-2,6-diaminopimeloyl-D-alanyl-D-alanine + di-trans,octa-cis-undecaprenyl phosphate = di-trans,octa-cis-undecaprenyl diphospho-N-acetyl-alpha-D-muramoyl-L-alanyl-D-glutamyl-meso-2,6-diaminopimeloyl-D-alanyl-D-alanine + UMP. It participates in cell wall biogenesis; peptidoglycan biosynthesis. Catalyzes the initial step of the lipid cycle reactions in the biosynthesis of the cell wall peptidoglycan: transfers peptidoglycan precursor phospho-MurNAc-pentapeptide from UDP-MurNAc-pentapeptide onto the lipid carrier undecaprenyl phosphate, yielding undecaprenyl-pyrophosphoryl-MurNAc-pentapeptide, known as lipid I. In Colwellia psychrerythraea (strain 34H / ATCC BAA-681) (Vibrio psychroerythus), this protein is Phospho-N-acetylmuramoyl-pentapeptide-transferase.